The primary structure comprises 320 residues: 4-diphosphocytidyl-2-C-methyl-D-erythritol kinase (320 aa).

Lysine 20 is a catalytic residue. Position 112–122 (112–122 (PVAGGMGGGSA)) interacts with ATP. Aspartate 154 is a catalytic residue.

This sequence belongs to the GHMP kinase family. IspE subfamily.

The enzyme catalyses 4-CDP-2-C-methyl-D-erythritol + ATP = 4-CDP-2-C-methyl-D-erythritol 2-phosphate + ADP + H(+). It functions in the pathway isoprenoid biosynthesis; isopentenyl diphosphate biosynthesis via DXP pathway; isopentenyl diphosphate from 1-deoxy-D-xylulose 5-phosphate: step 3/6. Catalyzes the phosphorylation of the position 2 hydroxy group of 4-diphosphocytidyl-2C-methyl-D-erythritol. This is 4-diphosphocytidyl-2-C-methyl-D-erythritol kinase from Arthrobacter sp. (strain FB24).